The primary structure comprises 622 residues: Low affinity potassium transport system protein Kup (622 aa).

12 helical membrane passes run 9-29 (LPAI…TSPL), 49-69 (VFGF…IKYL), 103-123 (VIMG…TPAI), 137-157 (PQLD…LFMI), 165-185 (VGQL…GLGL), 213-233 (VSFI…ALYA), 247-267 (WFTV…ALLL), 276-296 (PFFL…AALA), 337-357 (IYIP…IVSF), 363-383 (LAAA…ILST), 396-416 (FVAL…TANL), and 419-439 (LLSG…VMTT).

It belongs to the HAK/KUP transporter (TC 2.A.72) family.

It is found in the cell inner membrane. It catalyses the reaction K(+)(in) + H(+)(in) = K(+)(out) + H(+)(out). Functionally, responsible for the low-affinity transport of potassium into the cell. Likely operates as a K(+):H(+) symporter. This chain is Low affinity potassium transport system protein Kup, found in Escherichia coli O6:K15:H31 (strain 536 / UPEC).